A 341-amino-acid chain; its full sequence is Aromatic amino acid aminotransferase (341 aa).

K213 is modified (N6-(pyridoxal phosphate)lysine).

Belongs to the class-II pyridoxal-phosphate-dependent aminotransferase family. As to quaternary structure, homodimer. The cofactor is pyridoxal 5'-phosphate.

The enzyme catalyses an aromatic L-alpha-amino acid + 2-oxoglutarate = an aromatic oxo-acid + L-glutamate. In terms of biological role, aminotransferase that catalyzes the conversion of aromatic amino acids and 2-oxoglutarate into corresponding aromatic oxo acids and L-glutamate. The polypeptide is Aromatic amino acid aminotransferase (Corynebacterium glutamicum (strain R)).